Here is a 628-residue protein sequence, read N- to C-terminus: Chaperone protein HtpG (628 aa).

Residues 1–337 (MSEKKYTFET…SADLPLNVSR (337 aa)) are a; substrate-binding. A b region spans residues 338–554 (EILQHNKVID…DYGMSLHMQK (217 aa)). The interval 555 to 628 (MMEEAGQSFM…FVKLVNKYIR (74 aa)) is c.

Belongs to the heat shock protein 90 family. Homodimer.

It localises to the cytoplasm. Molecular chaperone. Has ATPase activity. This is Chaperone protein HtpG from Francisella tularensis subsp. tularensis (strain WY96-3418).